The chain runs to 218 residues: Ribosomal RNA small subunit methyltransferase G (218 aa).

Residues G86, L91, 137–138, and R153 contribute to the S-adenosyl-L-methionine site; that span reads AE.

The protein belongs to the methyltransferase superfamily. RNA methyltransferase RsmG family.

It is found in the cytoplasm. The catalysed reaction is guanosine(527) in 16S rRNA + S-adenosyl-L-methionine = N(7)-methylguanosine(527) in 16S rRNA + S-adenosyl-L-homocysteine. Functionally, specifically methylates the N7 position of guanine in position 527 of 16S rRNA. The protein is Ribosomal RNA small subunit methyltransferase G of Nitratidesulfovibrio vulgaris (strain ATCC 29579 / DSM 644 / CCUG 34227 / NCIMB 8303 / VKM B-1760 / Hildenborough) (Desulfovibrio vulgaris).